The sequence spans 83 residues: Small ribosomal subunit protein eS21 (83 aa).

This sequence belongs to the eukaryotic ribosomal protein eS21 family. As to quaternary structure, component of the 40S small ribosomal subunit.

It is found in the cytoplasm. It localises to the cytosol. The protein localises to the rough endoplasmic reticulum. This chain is Small ribosomal subunit protein eS21 (RpS21), found in Biphyllus lunatus (Beetle).